We begin with the raw amino-acid sequence, 369 residues long: Peptidyl-prolyl cis-trans isomerase D (369 aa).

Positions 8-173 (YFDLSIGGKP…ADVRIDACGI (166 aa)) constitute a PPIase cyclophilin-type domain. TPR repeat units lie at residues 218–251 (VEAV…LQEY), 269–302 (VAVH…AADD), and 306–339 (AKAL…QPGD).

Belongs to the cyclophilin-type PPIase family. PPIase D subfamily.

Its subcellular location is the cytoplasm. It catalyses the reaction [protein]-peptidylproline (omega=180) = [protein]-peptidylproline (omega=0). Its function is as follows. PPIases accelerate the folding of proteins. It catalyzes the cis-trans isomerization of proline imidic peptide bonds in oligopeptides. The chain is Peptidyl-prolyl cis-trans isomerase D (CPR6) from Eremothecium gossypii (strain ATCC 10895 / CBS 109.51 / FGSC 9923 / NRRL Y-1056) (Yeast).